We begin with the raw amino-acid sequence, 230 residues long: Fibrillarin-like rRNA/tRNA 2'-O-methyltransferase (230 aa).

S-adenosyl-L-methionine is bound by residues 87–88 (TT), 105–106 (EY), 130–131 (DA), and 150–153 (DVAQ).

Interacts with nop5. Component of box C/D small ribonucleoprotein (sRNP) particles that contain rpl7ae, FlpA and nop5, plus a guide RNA.

In terms of biological role, involved in pre-rRNA and tRNA processing. Utilizes the methyl donor S-adenosyl-L-methionine to catalyze the site-specific 2'-hydroxyl methylation of ribose moieties in rRNA and tRNA. Site specificity is provided by a guide RNA that base pairs with the substrate. Methylation occurs at a characteristic distance from the sequence involved in base pairing with the guide RNA. The polypeptide is Fibrillarin-like rRNA/tRNA 2'-O-methyltransferase (Methanocaldococcus jannaschii (strain ATCC 43067 / DSM 2661 / JAL-1 / JCM 10045 / NBRC 100440) (Methanococcus jannaschii)).